Consider the following 61-residue polypeptide: Cytochrome c oxidase subunit 9, mitochondrial (61 aa).

Over 1 to 13 (MAIAPITGTLKRK) the chain is Mitochondrial matrix. A helical membrane pass occupies residues 14–36 (IITDISIGFACGFALATGYWYIE). Residues 37–56 (HKPLIVKREAYYAKLKAQQE) lie on the Mitochondrial intermembrane side of the membrane. Positions 57–61 (AEDSA) are cleaved as a propeptide — removed in mature form.

The protein belongs to the fungal cytochrome c oxidase subunit 7a family. In terms of assembly, component of the cytochrome c oxidase (complex IV, CIV), a multisubunit enzyme composed of a catalytic core of 3 subunits and several supernumerary subunits. The complex exists as a monomer or a dimer and forms supercomplexes (SCs) in the inner mitochondrial membrane with ubiquinol-cytochrome c oxidoreductase (cytochrome b-c1 complex, complex III, CIII).

The protein resides in the mitochondrion inner membrane. It participates in energy metabolism; oxidative phosphorylation. Component of the cytochrome c oxidase, the last enzyme in the mitochondrial electron transport chain which drives oxidative phosphorylation. The respiratory chain contains 3 multisubunit complexes succinate dehydrogenase (complex II, CII), ubiquinol-cytochrome c oxidoreductase (cytochrome b-c1 complex, complex III, CIII) and cytochrome c oxidase (complex IV, CIV), that cooperate to transfer electrons derived from NADH and succinate to molecular oxygen, creating an electrochemical gradient over the inner membrane that drives transmembrane transport and the ATP synthase. Cytochrome c oxidase is the component of the respiratory chain that catalyzes the reduction of oxygen to water. Electrons originating from reduced cytochrome c in the intermembrane space (IMS) are transferred via the dinuclear copper A center (CU(A)) of subunit 2 and heme A of subunit 1 to the active site in subunit 1, a binuclear center (BNC) formed by heme A3 and copper B (CU(B)). The BNC reduces molecular oxygen to 2 water molecules using 4 electrons from cytochrome c in the IMS and 4 protons from the mitochondrial matrix. The sequence is that of Cytochrome c oxidase subunit 9, mitochondrial (COX9) from Debaryomyces hansenii (strain ATCC 36239 / CBS 767 / BCRC 21394 / JCM 1990 / NBRC 0083 / IGC 2968) (Yeast).